The chain runs to 245 residues: Carboxy-S-adenosyl-L-methionine synthase (245 aa).

Residues tyrosine 39, 64 to 66 (GSS), 117 to 118 (DI), and arginine 199 each bind S-adenosyl-L-methionine.

This sequence belongs to the class I-like SAM-binding methyltransferase superfamily. Cx-SAM synthase family. Homodimer.

The catalysed reaction is prephenate + S-adenosyl-L-methionine = carboxy-S-adenosyl-L-methionine + 3-phenylpyruvate + H2O. In terms of biological role, catalyzes the conversion of S-adenosyl-L-methionine (SAM) to carboxy-S-adenosyl-L-methionine (Cx-SAM). This is Carboxy-S-adenosyl-L-methionine synthase from Desulfotalea psychrophila (strain LSv54 / DSM 12343).